The chain runs to 553 residues: Muellerian-inhibiting factor (553 aa).

An N-terminal signal peptide occupies residues 1–22 (MQGPHLSLLLLLLATMGAVLQA). Positions 23-445 (DTVEELTNTR…GREGRGRAGR (423 aa)) are excised as a propeptide. Asn-325 and Asn-409 each carry an N-linked (GlcNAc...) asparagine glycan. 3 disulfides stabilise this stretch: Cys-455–Cys-519, Cys-481–Cys-550, and Cys-485–Cys-552.

The protein belongs to the TGF-beta family. As to quaternary structure, homodimer; disulfide-linked. Post-translationally, preproprotein is proteolytically processed to generate N- and C-terminal cleavage products that homodimerize and associate to form a biologically active non-covalent complex. Binding of the non-covalent complex to AMHR2 induces dissociation of the pro-region from the mature C-terminal dimer. The N-terminal portion of the protein, despite having no intrinsic activity, has the role of amplifying the activity of the C-terminus. As to expression, mainly expressed in granulosa cells from preantral and small antral follicles.

The protein localises to the secreted. Its function is as follows. Plays an important role in several reproductive functions. Induces Muellerian duct regression during male fetal sexual differentiation and plays a role in Leydig cell differentiation and function. In female acts as a negative regulator of the primordial to primary follicle transition and decreases FSH sensitivity of growing follicles. AMH signals by binding to a specific type-II receptor, AMHR2, that heterodimerizes with type-I receptors (ACVR1 and BMPR1A), and recruiting SMAD proteins that are translocated to the nucleus to regulate target gene expression. The chain is Muellerian-inhibiting factor (Amh) from Rattus norvegicus (Rat).